A 448-amino-acid chain; its full sequence is MGRLFGTSGIRMKNLSPKIAYKVGLAVAKKYKKVVVGRDTRTTGKLIETALTAGILNGGGEVTTINIVPTPVLGFNARNYDVGIMITASHNPPEYNGIKLFNKNGLAFNKKEEDEIEEIIFKEDFIEVEWHSVGEIWEDSRAIRNYMEHILKNVEINEKFNVVIDCANASACLVSPYLFTDLGCHVISVNSHMDGRFIGRLPEPDEKNLKKTMDMIKGLNMSGDNYIGIAHDGDADRMVAIDEKGRLADFDKLLAAFSRYMVEKTGNKKIVTTVDASMIIDEYLKDLDVEIIRTKVGDVAVAEEMIKNSAVFGGEPSGTWIHADIHLTPDGILSGLRVLEMLDFYNKKLYEILDEIPSYVNLREKIPCEDDKKEKVMSYVIENGESLFKTVPETVDGARFNLENGWVLIRPSGTEPYIRVRVEAKNNKDAKELLEKGIKLVKEALSAL.

Catalysis depends on Ser-89, which acts as the Phosphoserine intermediate. Mg(2+) contacts are provided by Ser-89, Asp-232, Asp-234, and Asp-236. A Phosphoserine modification is found at Ser-89.

Belongs to the phosphohexose mutase family. As to quaternary structure, forms large aggregates. Requires Mg(2+) as cofactor. Activated by phosphorylation.

It catalyses the reaction alpha-D-glucosamine 1-phosphate = D-glucosamine 6-phosphate. Its function is as follows. Catalyzes the conversion of glucosamine-6-phosphate to glucosamine-1-phosphate. The sequence is that of Phosphoglucosamine mutase (glmM) from Methanocaldococcus jannaschii (strain ATCC 43067 / DSM 2661 / JAL-1 / JCM 10045 / NBRC 100440) (Methanococcus jannaschii).